Consider the following 222-residue polypeptide: N-(5'-phosphoribosyl)anthranilate isomerase (222 aa).

This sequence belongs to the TrpF family.

The catalysed reaction is N-(5-phospho-beta-D-ribosyl)anthranilate = 1-(2-carboxyphenylamino)-1-deoxy-D-ribulose 5-phosphate. It functions in the pathway amino-acid biosynthesis; L-tryptophan biosynthesis; L-tryptophan from chorismate: step 3/5. This is N-(5'-phosphoribosyl)anthranilate isomerase from Xanthomonas euvesicatoria pv. vesicatoria (strain 85-10) (Xanthomonas campestris pv. vesicatoria).